A 236-amino-acid chain; its full sequence is MKIGIIGAMEPEVAHLIAAMTNTSSQTIADIEFIAGTLAGKDVVVTRSGIGKVAASIATTLLIEKYAPDAVINTGSAGGFVDSLSIGDIVISSEVRHHDVDVTAFGYEIGQMAQQPAAFIPAPYLVEAANKAIAQLGEVRAIEGLICTGDSFICDPVRTKTMLEHFPTMAACEMEGAAIAQVCHQFGVPFVVIRSLSDNANNDSPVDFDAYIVKAGYHSALMVMLLLEQLEPNSVK.

The active-site Proton acceptor is Glu12. Substrate contacts are provided by residues Gly78, Ile153, and Met174 to Glu175. The active-site Proton donor is Asp198.

Belongs to the PNP/UDP phosphorylase family. MtnN subfamily.

The enzyme catalyses S-adenosyl-L-homocysteine + H2O = S-(5-deoxy-D-ribos-5-yl)-L-homocysteine + adenine. The catalysed reaction is S-methyl-5'-thioadenosine + H2O = 5-(methylsulfanyl)-D-ribose + adenine. It carries out the reaction 5'-deoxyadenosine + H2O = 5-deoxy-D-ribose + adenine. Its pathway is amino-acid biosynthesis; L-methionine biosynthesis via salvage pathway; S-methyl-5-thio-alpha-D-ribose 1-phosphate from S-methyl-5'-thioadenosine (hydrolase route): step 1/2. Functionally, catalyzes the irreversible cleavage of the glycosidic bond in both 5'-methylthioadenosine (MTA) and S-adenosylhomocysteine (SAH/AdoHcy) to adenine and the corresponding thioribose, 5'-methylthioribose and S-ribosylhomocysteine, respectively. Also cleaves 5'-deoxyadenosine, a toxic by-product of radical S-adenosylmethionine (SAM) enzymes, into 5-deoxyribose and adenine. The protein is 5'-methylthioadenosine/S-adenosylhomocysteine nucleosidase of Shewanella oneidensis (strain ATCC 700550 / JCM 31522 / CIP 106686 / LMG 19005 / NCIMB 14063 / MR-1).